Here is an 893-residue protein sequence, read N- to C-terminus: Translation initiation factor IF-2 (893 aa).

Positions 1–266 (MVDTKNPGDK…AKPAPSKQRG (266 aa)) are disordered. Residues 59–70 (PADAPTAAAAAP) show a composition bias toward low complexity. The segment covering 71 to 92 (APAPAPVPSAAPRPAAPPPPSR) has biased composition (pro residues). Positions 93-104 (PQQSRSQSPSRS) are enriched in low complexity. Composition is skewed to basic and acidic residues over residues 128-148 (ARVR…RRNS) and 155-196 (AERE…EAKR). The segment covering 197–226 (PAAAATPAKSATPAARPTGAPAVRAPGVAA) has biased composition (low complexity). The 172-residue stretch at 389 to 560 (PRSPVVTVMG…ALQAELLDLK (172 aa)) folds into the tr-type G domain. The G1 stretch occupies residues 398–405 (GHVDHGKT). 398–405 (GHVDHGKT) provides a ligand contact to GTP. A G2 region spans residues 423-427 (GITQH). Residues 446 to 449 (DTPG) are G3. Residues 446 to 450 (DTPGH) and 500 to 503 (NKID) each bind GTP. The interval 500–503 (NKID) is G4. The G5 stretch occupies residues 536–538 (SAK).

This sequence belongs to the TRAFAC class translation factor GTPase superfamily. Classic translation factor GTPase family. IF-2 subfamily.

Its subcellular location is the cytoplasm. One of the essential components for the initiation of protein synthesis. Protects formylmethionyl-tRNA from spontaneous hydrolysis and promotes its binding to the 30S ribosomal subunits. Also involved in the hydrolysis of GTP during the formation of the 70S ribosomal complex. This is Translation initiation factor IF-2 from Rhodopseudomonas palustris (strain BisA53).